The sequence spans 299 residues: Ornithine carbamoyltransferase (299 aa).

Residues 52–55, Gln79, Arg103, and 130–133 contribute to the carbamoyl phosphate site; these read STRT and HPCQ. Residues Asn161, Asp218, and 222–223 contribute to the L-ornithine site; that span reads SM. Residues 258 to 259 and Arg286 contribute to the carbamoyl phosphate site; that span reads CL.

It belongs to the aspartate/ornithine carbamoyltransferase superfamily. OTCase family.

It localises to the cytoplasm. It catalyses the reaction carbamoyl phosphate + L-ornithine = L-citrulline + phosphate + H(+). It functions in the pathway amino-acid biosynthesis; L-arginine biosynthesis; L-arginine from L-ornithine and carbamoyl phosphate: step 1/3. Its function is as follows. Reversibly catalyzes the transfer of the carbamoyl group from carbamoyl phosphate (CP) to the N(epsilon) atom of ornithine (ORN) to produce L-citrulline. The chain is Ornithine carbamoyltransferase from Ruthia magnifica subsp. Calyptogena magnifica.